We begin with the raw amino-acid sequence, 532 residues long: Probable galacturonosyltransferase 14 (532 aa).

The Cytoplasmic segment spans residues 1–40 (MQLHISPSMRSITISSSNEFIDLMKIKVAARHISYRTLFH). Residues 41 to 61 (TILILAFLLPFVFILTAVVTL) traverse the membrane as a helical; Signal-anchor for type II membrane protein segment. The Lumenal portion of the chain corresponds to 62-532 (EGVNKCSSID…DFIKNCHILE (471 aa)). 4 N-linked (GlcNAc...) asparagine glycosylation sites follow: Asn305, Asn395, Asn444, and Asn519.

It belongs to the glycosyltransferase 8 family. Expressed in roots, inflorescences, siliques, leaves and stems. Accumulates in pollen grains.

The protein resides in the golgi apparatus membrane. It functions in the pathway glycan metabolism; pectin biosynthesis. Its function is as follows. May be involved in pectin and/or xylans biosynthesis in cell walls. Together with GAUT13, required for pollen tube growth, possibly through the regulation of pectin biosynthesis and repartition in the pollen tube wall. This is Probable galacturonosyltransferase 14 from Arabidopsis thaliana (Mouse-ear cress).